The sequence spans 420 residues: Tryptophan synthase beta chain (420 aa).

The residue at position 99 (K99) is an N6-(pyridoxal phosphate)lysine.

The protein belongs to the TrpB family. Tetramer of two alpha and two beta chains. Pyridoxal 5'-phosphate is required as a cofactor.

It carries out the reaction (1S,2R)-1-C-(indol-3-yl)glycerol 3-phosphate + L-serine = D-glyceraldehyde 3-phosphate + L-tryptophan + H2O. It functions in the pathway amino-acid biosynthesis; L-tryptophan biosynthesis; L-tryptophan from chorismate: step 5/5. The beta subunit is responsible for the synthesis of L-tryptophan from indole and L-serine. This Helicobacter hepaticus (strain ATCC 51449 / 3B1) protein is Tryptophan synthase beta chain.